The following is a 74-amino-acid chain: uncharacterized protein (74 aa).

A run of 2 helical transmembrane segments spans residues 3–23 and 35–55; these read YSAL…CFSF and ILFF…MLLT.

The protein localises to the cell membrane. This is an uncharacterized protein from Mycoplasma genitalium (strain ATCC 33530 / DSM 19775 / NCTC 10195 / G37) (Mycoplasmoides genitalium).